Consider the following 102-residue polypeptide: Large ribosomal subunit protein bL21 (102 aa).

This sequence belongs to the bacterial ribosomal protein bL21 family. Part of the 50S ribosomal subunit. Contacts protein L20.

In terms of biological role, this protein binds to 23S rRNA in the presence of protein L20. This is Large ribosomal subunit protein bL21 from Leifsonia xyli subsp. xyli (strain CTCB07).